Here is a 424-residue protein sequence, read N- to C-terminus: Type II methyltransferase M.XorII (424 aa).

Residues 4–367 (PIGIDLFAGA…GQIMKALRKK (364 aa)) form the SAM-dependent MTase C5-type domain. Residue Cys-83 is part of the active site. Residues 404–424 (RSRPVDRPAPRRHEERELVTA) are disordered. A compositionally biased stretch (basic and acidic residues) spans 406 to 424 (RPVDRPAPRRHEERELVTA).

It belongs to the class I-like SAM-binding methyltransferase superfamily. C5-methyltransferase family.

The catalysed reaction is a 2'-deoxycytidine in DNA + S-adenosyl-L-methionine = a 5-methyl-2'-deoxycytidine in DNA + S-adenosyl-L-homocysteine + H(+). Its function is as follows. A methylase that recognizes the double-stranded sequence 5'-CGATCG-3', methylates C-? on both strands and protects the DNA from cleavage by the XorII endonuclease. The sequence is that of Type II methyltransferase M.XorII (xorIIM) from Xanthomonas oryzae pv. oryzae (strain KACC10331 / KXO85).